We begin with the raw amino-acid sequence, 441 residues long: Transducin-like enhancer protein 7 (441 aa).

Disordered regions lie at residues 1-77 and 91-119; these read MSGE…QWHL and PDAQ…SSSS. Low complexity predominate over residues 27–49; the sequence is ESSGVSSQPEPQVQQQLGSLLGV. Positions 62 to 76 are enriched in polar residues; that stretch reads PADQETSTVTQQQWH. A compositionally biased stretch (low complexity) spans 108 to 119; the sequence is GSEVGQPYSSSS. WD repeat units lie at residues 156-194, 204-243, 247-285, 286-325, and 409-441; these read FHGK…AGEK, HPQD…QVRA, STGP…LIRK, HEVP…RLHQ, and EESS…QLLY.

It belongs to the WD repeat Groucho/TLE family.

This Homo sapiens (Human) protein is Transducin-like enhancer protein 7.